A 155-amino-acid chain; its full sequence is Ribonuclease H (155 aa).

One can recognise an RNase H type-1 domain in the interval 1–142 (MLKQVEIFTD…CDELARAAAM (142 aa)). Residues aspartate 10, glutamate 48, aspartate 70, and aspartate 134 each coordinate Mg(2+).

It belongs to the RNase H family. Monomer. Mg(2+) serves as cofactor.

It is found in the cytoplasm. It catalyses the reaction Endonucleolytic cleavage to 5'-phosphomonoester.. Endonuclease that specifically degrades the RNA of RNA-DNA hybrids. The polypeptide is Ribonuclease H (Escherichia coli (strain 55989 / EAEC)).